Reading from the N-terminus, the 186-residue chain is Lipid A acyltransferase PagP (186 aa).

An N-terminal signal peptide occupies residues 1-19; the sequence is MKRLISCLTIICALNRSAA. Residues histidine 60, aspartate 103, and serine 104 contribute to the active site.

The protein belongs to the lipid A palmitoyltransferase family. Homodimer.

The protein resides in the cell outer membrane. It carries out the reaction a lipid A + a 1,2-diacyl-sn-glycero-3-phosphocholine = a hepta-acyl lipid A + a 2-acyl-sn-glycero-3-phosphocholine. The catalysed reaction is a lipid IVA + a 1,2-diacyl-sn-glycero-3-phosphocholine = a lipid IVB + a 2-acyl-sn-glycero-3-phosphocholine. It catalyses the reaction a lipid IIA + a 1,2-diacyl-sn-glycero-3-phosphocholine = a lipid IIB + a 2-acyl-sn-glycero-3-phosphocholine. Transfers a fatty acid residue from the sn-1 position of a phospholipid to the N-linked hydroxyfatty acid chain on the proximal unit of lipid A or its precursors. Confers resistance to cationic antimicrobial peptides (CAMPs). Promotes the ability of L.pneumophila to replicate and/or survive in macrophages. Important for ability to kill macrophages and to promote the virulence. This chain is Lipid A acyltransferase PagP, found in Legionella pneumophila.